Reading from the N-terminus, the 452-residue chain is UDP-N-acetylmuramoylalanine--D-glutamate ligase (452 aa).

119–125 lines the ATP pocket; it reads GSNGKTT.

This sequence belongs to the MurCDEF family.

The protein resides in the cytoplasm. It carries out the reaction UDP-N-acetyl-alpha-D-muramoyl-L-alanine + D-glutamate + ATP = UDP-N-acetyl-alpha-D-muramoyl-L-alanyl-D-glutamate + ADP + phosphate + H(+). Its pathway is cell wall biogenesis; peptidoglycan biosynthesis. Its function is as follows. Cell wall formation. Catalyzes the addition of glutamate to the nucleotide precursor UDP-N-acetylmuramoyl-L-alanine (UMA). In Streptococcus pyogenes serotype M12 (strain MGAS9429), this protein is UDP-N-acetylmuramoylalanine--D-glutamate ligase.